The chain runs to 103 residues: Pyrimidine/purine nucleoside phosphorylase (103 aa).

The protein belongs to the nucleoside phosphorylase PpnP family.

The catalysed reaction is a purine D-ribonucleoside + phosphate = a purine nucleobase + alpha-D-ribose 1-phosphate. It catalyses the reaction adenosine + phosphate = alpha-D-ribose 1-phosphate + adenine. It carries out the reaction cytidine + phosphate = cytosine + alpha-D-ribose 1-phosphate. The enzyme catalyses guanosine + phosphate = alpha-D-ribose 1-phosphate + guanine. The catalysed reaction is inosine + phosphate = alpha-D-ribose 1-phosphate + hypoxanthine. It catalyses the reaction thymidine + phosphate = 2-deoxy-alpha-D-ribose 1-phosphate + thymine. It carries out the reaction uridine + phosphate = alpha-D-ribose 1-phosphate + uracil. The enzyme catalyses xanthosine + phosphate = alpha-D-ribose 1-phosphate + xanthine. Its function is as follows. Catalyzes the phosphorolysis of diverse nucleosides, yielding D-ribose 1-phosphate and the respective free bases. Can use uridine, adenosine, guanosine, cytidine, thymidine, inosine and xanthosine as substrates. Also catalyzes the reverse reactions. In Shewanella sp. (strain MR-4), this protein is Pyrimidine/purine nucleoside phosphorylase.